The primary structure comprises 269 residues: 4-hydroxy-tetrahydrodipicolinate reductase (269 aa).

11–16 (GPIGRM) is a binding site for NAD(+). Position 39 (lysine 39) interacts with NADP(+). Residues 101–103 (GTT) and 125–128 (ASNF) contribute to the NAD(+) site. The active-site Proton donor/acceptor is histidine 158. (S)-2,3,4,5-tetrahydrodipicolinate is bound at residue histidine 159. Catalysis depends on lysine 162, which acts as the Proton donor. 168–169 (GT) contacts (S)-2,3,4,5-tetrahydrodipicolinate.

This sequence belongs to the DapB family. In terms of assembly, homotetramer.

It is found in the cytoplasm. It carries out the reaction (S)-2,3,4,5-tetrahydrodipicolinate + NAD(+) + H2O = (2S,4S)-4-hydroxy-2,3,4,5-tetrahydrodipicolinate + NADH + H(+). It catalyses the reaction (S)-2,3,4,5-tetrahydrodipicolinate + NADP(+) + H2O = (2S,4S)-4-hydroxy-2,3,4,5-tetrahydrodipicolinate + NADPH + H(+). Its pathway is amino-acid biosynthesis; L-lysine biosynthesis via DAP pathway; (S)-tetrahydrodipicolinate from L-aspartate: step 4/4. Functionally, catalyzes the conversion of 4-hydroxy-tetrahydrodipicolinate (HTPA) to tetrahydrodipicolinate. The chain is 4-hydroxy-tetrahydrodipicolinate reductase from Buchnera aphidicola subsp. Acyrthosiphon pisum (strain 5A).